The following is a 621-amino-acid chain: MALALVSVAPLVSMRRSLFSSPYELKSIDKTIPNLVMCRKRMSGTPSIRVSSTTSASNDDGVRRRVGDYRYNHWDDDLIDSLATSYEAPSYLERADTLVEAIKDRFNSMGVDDGERMSPLTDLYQRLWMVDSVERLGIDRHFQNEIKSALDYVFSYWKEKGIGRGRQSAVTDLNSTALGLRTLRLHGYPVSSDVLENFKDHNGQFTCSGIQTEGEIRGVLNLFRASLIAFPGEKVMEEAEIFSTMYLKHALQKIAVSSLSQEIEYLLEYGWHTNPPRLEARMYMEVFPQDTIYEQKLVELAKVEFNIFHSLQKRELQSLTRWWKHYGFPQLSFTRHIHVEYYTFGSCIATDPKQSAFRLCFAKMSYFVTVLDDIYDTYGTMEELELFTAAIKRWDPSVVDCLPEYMKGVYMAVYDTVNEMAKEAEKVQGRDTLNYVRQAWELYIDAYMPEAKWISSGYLPTFQEYLDNSKISFGTRITILQPILTLGEPLPHEILQEIDFPAKFNDLISVILRLKGDTRCYKADRARGEEASSVSCYMKDNAGITEEDAVHCINDMVNNLLKELNWELLKPDSNVPISCRKAAFDICRIFHHGYKYRDGYGDATIEVKNLVKRTVLEPVPL.

The N-terminal 49 residues, 1 to 49, are a transit peptide targeting the chloroplast; that stretch reads MALALVSVAPLVSMRRSLFSSPYELKSIDKTIPNLVMCRKRMSGTPSIR. Mg(2+)-binding residues include D372, D376, and D524. The short motif at 372 to 376 is the DDXXD motif element; sequence DDIYD.

Belongs to the terpene synthase family. Tpsd subfamily. It depends on Mg(2+) as a cofactor. Requires Mn(2+) as cofactor.

It localises to the plastid. The protein localises to the chloroplast. It catalyses the reaction (2E)-geranyl diphosphate = (-)-beta-phellandrene + diphosphate. The protein operates within terpene metabolism; oleoresin biosynthesis. It functions in the pathway secondary metabolite biosynthesis; terpenoid biosynthesis. Functionally, monoterpene synthase (TPS) involved in the biosynthesis of monoterpene natural products included in conifer oleoresin secretions and volatile emissions; these compounds contribute to biotic and abiotic stress defense against herbivores and pathogens. Catalyzes the conversion of (2E)-geranyl diphosphate (GPP) to (-)-beta-phellandrene and, to a lower extent, to (-)-alpha-phellandrene. This is (-)-beta-phellandrene synthase 1, chloroplastic from Pinus contorta (Shore pine).